The primary structure comprises 588 residues: Zeta-carotene desaturase, chloroplastic/chromoplastic (588 aa).

It belongs to the zeta carotene desaturase family. NAD(+) is required as a cofactor. The cofactor is NADP(+). Requires FAD as cofactor.

It is found in the plastid. Its subcellular location is the chloroplast. The protein resides in the chromoplast. The catalysed reaction is 9,9'-di-cis-zeta-carotene + 2 a quinone = 7,7',9,9'-tetra-cis-lycopene + 2 a quinol. It functions in the pathway carotenoid biosynthesis; lycopene biosynthesis. In terms of biological role, catalyzes the conversion of zeta-carotene to lycopene via the intermediary of neurosporene. It carries out two consecutive desaturations (introduction of double bonds) at positions C-7 and C-7'. This is Zeta-carotene desaturase, chloroplastic/chromoplastic (ZDS) from Solanum lycopersicum (Tomato).